A 478-amino-acid chain; its full sequence is MALGFIKKVFSFGKDKAETEERPQEDAALERGNENASFEAALSDAEAHDAVDKDPVSELEMETAGGPAADEAVDVAPAEDDEEEDAPLLPGAELSGDMGLVPLSLLQAEAAAEEQGEPLPEPLDAGLDADAMDALLNEAEAASAVESPAIPPVLPKGFSSAREREEPVPVAPQVKLTWFQRLRAGLARTSSQLTTQISALFTKRKLDEDTLDELEDLLIQSDLGVETAMRITGALSSERYGKDVSGEDVARIMAGEITKVLKPVAKPLELDLSHKPHVILVVGVNGTGKTTTIGKLAAKLSGSGLKVMLAAGDTFRAAAIEQLKIWADRTGSEFIGTKLGADAAGLAYDAYEQARAQKSDVLIIDTAGRLQNKTELMAELEKIVRVLGKLDPDAPHTVLQTLDATTGQNAMNQVEIFRNVAGVSGLIMTKLDGTARGGILVAIAAKHKLPVYFIGVGEGVEDLEPFEAEDFAKAIAGV.

2 stretches are compositionally biased toward basic and acidic residues: residues 14–33 and 45–56; these read KDKA…ERGN and AEAHDAVDKDPV. A disordered region spans residues 14-94; it reads KDKAETEERP…DAPLLPGAEL (81 aa). The span at 71–86 shows a compositional bias: acidic residues; that stretch reads EAVDVAPAEDDEEEDA. GTP is bound by residues 283–290, 365–369, and 429–432; these read GVNGTGKT, DTAGR, and TKLD.

This sequence belongs to the GTP-binding SRP family. FtsY subfamily. Part of the signal recognition particle protein translocation system, which is composed of SRP and FtsY. SRP is a ribonucleoprotein composed of Ffh and a 4.5S RNA molecule.

The protein resides in the cell inner membrane. The protein localises to the cytoplasm. The catalysed reaction is GTP + H2O = GDP + phosphate + H(+). Its function is as follows. Involved in targeting and insertion of nascent membrane proteins into the cytoplasmic membrane. Acts as a receptor for the complex formed by the signal recognition particle (SRP) and the ribosome-nascent chain (RNC). Interaction with SRP-RNC leads to the transfer of the RNC complex to the Sec translocase for insertion into the membrane, the hydrolysis of GTP by both Ffh and FtsY, and the dissociation of the SRP-FtsY complex into the individual components. The sequence is that of Signal recognition particle receptor FtsY from Agrobacterium fabrum (strain C58 / ATCC 33970) (Agrobacterium tumefaciens (strain C58)).